The following is a 96-amino-acid chain: Signal recognition particle 19 kDa protein (96 aa).

The protein belongs to the SRP19 family. As to quaternary structure, part of the signal recognition particle protein translocation system, which is composed of SRP and FtsY. Archaeal SRP consists of a 7S RNA molecule of 300 nucleotides and two protein subunits: SRP54 and SRP19.

Its subcellular location is the cytoplasm. In terms of biological role, involved in targeting and insertion of nascent membrane proteins into the cytoplasmic membrane. Binds directly to 7S RNA and mediates binding of the 54 kDa subunit of the SRP. The polypeptide is Signal recognition particle 19 kDa protein (Pyrobaculum arsenaticum (strain DSM 13514 / JCM 11321 / PZ6)).